A 100-amino-acid chain; its full sequence is Small ribosomal subunit protein uS14c (100 aa).

It belongs to the universal ribosomal protein uS14 family. As to quaternary structure, part of the 30S ribosomal subunit.

Its subcellular location is the plastid. The protein localises to the chloroplast. Its function is as follows. Binds 16S rRNA, required for the assembly of 30S particles. The protein is Small ribosomal subunit protein uS14c of Gracilaria tenuistipitata var. liui (Red alga).